The following is a 311-amino-acid chain: Aspartate carbamoyltransferase catalytic subunit (311 aa).

Residues Arg58 and Thr59 each coordinate carbamoyl phosphate. Residue Lys86 coordinates L-aspartate. Carbamoyl phosphate contacts are provided by Arg108, His136, and Gln139. Positions 169 and 224 each coordinate L-aspartate. Gly265 and Pro266 together coordinate carbamoyl phosphate.

This sequence belongs to the aspartate/ornithine carbamoyltransferase superfamily. ATCase family. In terms of assembly, heterododecamer (2C3:3R2) of six catalytic PyrB chains organized as two trimers (C3), and six regulatory PyrI chains organized as three dimers (R2).

The enzyme catalyses carbamoyl phosphate + L-aspartate = N-carbamoyl-L-aspartate + phosphate + H(+). The protein operates within pyrimidine metabolism; UMP biosynthesis via de novo pathway; (S)-dihydroorotate from bicarbonate: step 2/3. Functionally, catalyzes the condensation of carbamoyl phosphate and aspartate to form carbamoyl aspartate and inorganic phosphate, the committed step in the de novo pyrimidine nucleotide biosynthesis pathway. This chain is Aspartate carbamoyltransferase catalytic subunit, found in Geotalea uraniireducens (strain Rf4) (Geobacter uraniireducens).